A 202-amino-acid polypeptide reads, in one-letter code: Transmembrane protein 223 (202 aa).

Topologically, residues 1-43 (MAAPGRRWSVLLFRALQSLSARRALHDTAPPRDVLLFEHERGR) are mitochondrial matrix. Residues 44-64 (FFAVLGLFCAGQGVFWASLAI) traverse the membrane as a helical segment. Residues 65–97 (ASLARPPTPVRPTDAKTPDHGGLDLRSTLWRYG) lie on the Mitochondrial intermembrane side of the membrane. The chain crosses the membrane as a helical span at residues 98–118 (LAVGCGAIGSLVLGAGLLFSL). The Mitochondrial matrix portion of the chain corresponds to 119–202 (RSVRSVMLRA…DNTVGAYRSL (84 aa)).

This sequence belongs to the TMEM223 family. As to quaternary structure, associates with the mitochondrial ribosome.

It localises to the mitochondrion inner membrane. Mitochondrial ribosome-associated protein involved in the first steps of cytochrome c oxidase complex (complex IV) biogenesis. Stimulates the translation of MT-CO1 mRNA and is a constituent of early MT-CO1 assembly intermediates. This is Transmembrane protein 223 from Bos taurus (Bovine).